A 490-amino-acid polypeptide reads, in one-letter code: Phosphoglucosamine mutase (490 aa).

Ser-139 (phosphoserine intermediate) is an active-site residue. Positions 139, 279, 281, and 283 each coordinate Mg(2+). The residue at position 139 (Ser-139) is a Phosphoserine.

Belongs to the phosphohexose mutase family. Mg(2+) serves as cofactor. Post-translationally, activated by phosphorylation.

The catalysed reaction is alpha-D-glucosamine 1-phosphate = D-glucosamine 6-phosphate. Its function is as follows. Catalyzes the conversion of glucosamine-6-phosphate to glucosamine-1-phosphate. This Nostoc punctiforme (strain ATCC 29133 / PCC 73102) protein is Phosphoglucosamine mutase.